Here is a 144-residue protein sequence, read N- to C-terminus: Granulocyte-macrophage colony-stimulating factor (144 aa).

The signal sequence occupies residues 1 to 17 (MWLQNLLFLGIVVYSFS). O-linked (GalNAc...) serine glycosylation occurs at Ser22. O-linked (GalNAc...) threonine glycosylation is present at Thr27. Intrachain disulfides connect Cys71-Cys113 and Cys105-Cys138. N-linked (GlcNAc...) asparagine glycosylation is present at Asn86.

This sequence belongs to the GM-CSF family. Monomer. The signaling GM-CSF receptor complex is a dodecamer of two head-to-head hexamers of two alpha, two beta, and two ligand subunits.

It is found in the secreted. Cytokine that stimulates the growth and differentiation of hematopoietic precursor cells from various lineages, including granulocytes, macrophages, eosinophils and erythrocytes. This chain is Granulocyte-macrophage colony-stimulating factor (Csf2), found in Rattus norvegicus (Rat).